The chain runs to 219 residues: UPF0502 protein Gura_0277 (219 aa).

This sequence belongs to the UPF0502 family.

The chain is UPF0502 protein Gura_0277 from Geotalea uraniireducens (strain Rf4) (Geobacter uraniireducens).